We begin with the raw amino-acid sequence, 68 residues long: Large ribosomal subunit protein bL35 (68 aa).

It belongs to the bacterial ribosomal protein bL35 family.

The sequence is that of Large ribosomal subunit protein bL35 from Onion yellows phytoplasma (strain OY-M).